The following is a 1769-amino-acid chain: Tight junction protein 1 (1769 aa).

The 88-residue stretch at 23–110 folds into the PDZ 1 domain; it reads TVTLHRAPGF…NAKITIRRKK (88 aa). Over residues 102–112 the composition is skewed to basic residues; the sequence is AKITIRRKKKV. The tract at residues 102-188 is disordered; the sequence is AKITIRRKKK…QPPKPTKVTL (87 aa). The segment covering 123–135 has biased composition (acidic residues); the sequence is PVSENEDSYDEEV. S125 carries the phosphoserine modification. Y131 carries the post-translational modification Phosphotyrosine. The segment covering 148-174 has biased composition (basic and acidic residues); it reads RRSEKSWARDRSASRERSLSPRSDRRS. 3 positions are modified to phosphoserine: S174, S177, and S178. T184 is subject to Phosphothreonine. Positions 185-263 constitute a PDZ 2 domain; it reads KVTLVKSRKN…KLKMVVQRDE (79 aa). Residues S211 and S240 each carry the phosphoserine modification. At T266 the chain carries Phosphothreonine. A phosphoserine mark is found at S274, S276, S279, S283, S289, S293, S296, S299, S322, S328, S333, S336, and S352. The segment at 295-362 is disordered; it reads ASDHSGRSHD…TPVKHADDHT (68 aa). Basic and acidic residues predominate over residues 298 to 326; it reads HSGRSHDRPPRHSRSRSPDQRSEPSDHSR. The residue at position 353 (T353) is a Phosphothreonine. The PDZ 3 domain occupies 420–501; sequence SMKLVKFRKG…GEEVTILAQK (82 aa). An SH3 domain is found at 515-583; sequence GDSFYIRTHF…PNKNRAEQLA (69 aa). Residues 609 to 790 form the Guanylate kinase-like domain; the sequence is SKRNLRKSRE…WYGALKEAIQ (182 aa). Residues S616 and S621 each carry the phosphoserine modification. Positions 632 to 875 are occludin (OCLN)-binding region; that stretch reads YERVVLREAG…GTPPESAITR (244 aa). A Phosphothreonine modification is found at T808. A phosphoserine mark is found at S809 and S820. Y821 carries the post-translational modification Phosphotyrosine. A phosphoserine mark is found at S823, S827, and S836. 2 disordered regions span residues 824-976 and 1010-1067; these read APGS…LRTP and EMMR…SYTD. 5 positions are modified to phosphothreonine: T845, T847, T853, T860, and T867. The span at 878–891 shows a compositional bias: basic and acidic residues; the sequence is EPVREDSSGMHHEN. Residues 892–905 are compositionally biased toward low complexity; the sequence is QTYPPYSPQAQPQP. S911 bears the Phosphoserine mark. Composition is skewed to polar residues over residues 933–952 and 962–976; these read PETN…TLTN and PSTS…LRTP. S967 is subject to Phosphoserine. Residue S1070 is modified to Phosphoserine. Disordered stretches follow at residues 1091–1212, 1224–1261, and 1273–1589; these read SYYD…KAGH, PLIP…MKPQ, and KRSA…EFDS. A compositionally biased stretch (basic and acidic residues) spans 1108-1124; the sequence is QHPRDLDSRQHPEESSE. S1138 is subject to Phosphoserine. A phosphotyrosine mark is found at Y1139 and Y1164. Residues 1150-1370 are actin-binding region (ABR); it reads RTSTLRHEEQ…FDRRSFENKP (221 aa). Basic and acidic residues predominate over residues 1273–1286; sequence KRSASLENKKDENH. Over residues 1300–1310 the composition is skewed to pro residues; it reads PGAPIIGPKPT. The span at 1335–1346 shows a compositional bias: basic and acidic residues; sequence PPEDIVRSNHYD. Residue Y1353 is modified to Phosphotyrosine. The residue at position 1365 (S1365) is a Phosphoserine. The segment covering 1387–1401 has biased composition (polar residues); that stretch reads HSQNQTNFSSYSSKG. Residues 1402-1419 are compositionally biased toward basic and acidic residues; the sequence is KSPEADAPDRSFGEKRYE. A Phosphoserine modification is found at S1412. Polar residues-rich tracts occupy residues 1460-1471 and 1514-1523; these read NSISLDFQNSLV and AEQTQKTVTP. The span at 1539-1548 shows a compositional bias: basic and acidic residues; the sequence is PFERKFESPK. Phosphoserine is present on residues S1546 and S1618. The 135-residue stretch at 1635-1769 folds into the ZU5 domain; that stretch reads ATARGVFNNN…NCVSVLIDHF (135 aa).

The protein belongs to the MAGUK family. Homodimer. Forms heterodimers TJP3. Forms a heterodimer (via PDZ2 domain) with TJP2/ZO2 (via PDZ2 domain). Interacts with OCLN. Interacts with CALM, claudins, CGN/cingulin, CXADR, GJA12, GJD3 and UBN1. Interacts (via ZU5 domain) with CDC42BPB and MYZAP. Interacts (via PDZ domain) with GJA1. Interacts (via PDZ domains) with ANKRD2. Interacts with POPDC1 (via the C-terminus cytoplasmic tail). Interacts with HSPA4. Interacts with KIRREL1. Interacts with DLL1. Interacts with USP53 (via the C-terminal region). Interacts with DNMBP (via C-terminal domain); required for the apical cell-cell junction localization of DNMBP. Interacts with SPEF1. Interacts (via N-terminus) with CTNNA1. Interacts with CLDN18. Interacts with CLDN16 (via TRV motif); this is a prerequisite for anchoring of CLDN16 at the tight junction. Interacts with PKP1; the interaction facilitates TJP1/ZO-1 localization to the plasma membrane. Interacts with PATJ (via PDZ1-6 domains); the interaction is required for attachment and extension of TJP1/ZO1 condensates along the apical cell interface. Post-translationally, phosphorylated at tyrosine redidues in response to epidermal growth factor (EGF). This response is dependent on an intact actin microfilament system. Dephosphorylated by PTPRJ.

It is found in the cell membrane. It localises to the cell junction. The protein resides in the tight junction. Its subcellular location is the gap junction. Functionally, TJP1, TJP2, and TJP3 are closely related scaffolding proteins that link tight junction (TJ) transmembrane proteins such as claudins, junctional adhesion molecules, and occludin to the actin cytoskeleton. Forms a multistranded TJP1/ZO1 condensate which elongates to form a tight junction belt, the belt is anchored at the apical cell membrane via interaction with PATJ. The tight junction acts to limit movement of substances through the paracellular space and as a boundary between the compositionally distinct apical and basolateral plasma membrane domains of epithelial and endothelial cells. Necessary for lumenogenesis, and particularly efficient epithelial polarization and barrier formation. Plays a role in the regulation of cell migration by targeting CDC42BPBb to the leading edge of migrating cells. With TJP2 and TJP3, participates in the junctional retention and stability of the transcription factor DBPA, but is not involved in its shuttling to the nucleus. May play a role in mediating cell morphology changes during ameloblast differentiation via its role in tight junctions. The sequence is that of Tight junction protein 1 from Canis lupus familiaris (Dog).